The chain runs to 59 residues: Small, acid-soluble spore protein C1 (59 aa).

This sequence belongs to the alpha/beta-type SASP family. In terms of processing, SASP are degraded in the first minutes of spore germination and provide amino acids for both new protein synthesis and metabolism.

Its function is as follows. SASP are bound to spore DNA. They are double-stranded DNA-binding proteins that cause DNA to change to an a-like conformation. They protect the DNA backbone from chemical and enzymatic cleavage and are thus involved in dormant spore's high resistance to UV light. The protein is Small, acid-soluble spore protein C1 (sspC1) of Clostridium perfringens (strain 13 / Type A).